We begin with the raw amino-acid sequence, 647 residues long: Protein cueball (647 aa).

The N-terminal stretch at 1–22 (MLWCPSVLVPLIAVAACLPVLA) is a signal peptide. The Extracellular portion of the chain corresponds to 23 to 534 (IGTPLEWEFA…CMTPSPWTSN (512 aa)). N-linked (GlcNAc...) asparagine glycosylation is found at Asn-80 and Asn-106. 3 LDL-receptor class B repeats span residues 119 to 166 (RNLF…DVCR), 167 to 211 (RKLY…DQLS), and 212 to 257 (DRIF…TNDA). N-linked (GlcNAc...) asparagine glycosylation is present at Asn-175. Asn-316 is a glycosylation site (N-linked (GlcNAc...) asparagine). EGF-like domains lie at 365–401 (DEKT…SRCE) and 436–473 (EISK…ERCE). Disulfide bonds link Cys-376–Cys-389, Cys-391–Cys-400, Cys-440–Cys-450, Cys-444–Cys-461, and Cys-463–Cys-472. Asn-475 is a glycosylation site (N-linked (GlcNAc...) asparagine). A helical transmembrane segment spans residues 535–555 (VIIVLVLGIVSCFFLVAVIVH). Residues 556-647 (GFRRLYKPKR…LIHNMDDDLY (92 aa)) lie on the Cytoplasmic side of the membrane.

It belongs to the cueball family.

It is found in the cell membrane. In terms of biological role, has a role in spermatogenesis and oogenesis. The protein is Protein cueball of Drosophila persimilis (Fruit fly).